Here is a 277-residue protein sequence, read N- to C-terminus: Tetrahydroxynaphthalene reductase PfmaG (277 aa).

NADP(+) contacts are provided by I36, D82, and N109. Residues S158, S159, and Y173 each act as proton donor in the active site. Positions 173, 177, 206, and 208 each coordinate NADP(+). K177 serves as the catalytic Lowers pKa of active site Tyr.

This sequence belongs to the short-chain dehydrogenases/reductases (SDR) family.

The enzyme catalyses scytalone + NADP(+) = naphthalene-1,3,6,8-tetrol + NADPH + H(+). The protein operates within pigment biosynthesis; melanin biosynthesis. Tetrahydroxynaphthalene reductase; part of the gene cluster that mediates the biosynthesis of dihydroxynaphthalene (DHN)-melanin, a bluish-green pigment forming a dark layer in the conidial wall that protects the conidia from UV radiations. The first step of the pathway is the production of the pentaketide 1,3,6,8-tetrahydroxynaphthalene (1,3,6,8-THN or T4HN) by the polyketide synthase PfmaE though condensation of acetyl-CoA with malonyl-CoA. T4HN is not stable and easily oxidizes into the stable form flaviolin. T4HN is also substrate of the hydroxynaphthalene reductase PfmaG to yield scytalone. The scytalone dehydratase PfmaJ then reduces scytalone to 1,3,8-THN. 1,3,8-THN is then substrate of the hydroxynaphthalene reductase PfmaI to yield vermelone. Vermelone is further converted by the multicopper oxidase PfmaD to 1,8-DHN. Finally the laccase PFICI_06862 transforms 1,8-DHN to DHN-melanin. The roles of the 5-oxoprolinase PfmaA and the proline iminopeptidase PfmaB within the cluster have not been elucidated yet. The chain is Tetrahydroxynaphthalene reductase PfmaG from Pestalotiopsis fici (strain W106-1 / CGMCC3.15140).